A 338-amino-acid chain; its full sequence is Glutaminase (338 aa).

Substrate contacts are provided by serine 80, asparagine 130, glutamate 174, asparagine 181, tyrosine 205, tyrosine 257, and valine 275.

The protein belongs to the glutaminase family. As to quaternary structure, homotetramer.

The catalysed reaction is L-glutamine + H2O = L-glutamate + NH4(+). The polypeptide is Glutaminase (Microcystis aeruginosa (strain NIES-843 / IAM M-2473)).